Here is a 219-residue protein sequence, read N- to C-terminus: Protein-methionine-sulfoxide reductase heme-binding subunit MsrQ (219 aa).

5 consecutive transmembrane segments (helical) span residues 17–37, 88–108, 121–141, 153–173, and 184–204; these read AKPLIFMVCLLPFAWLFYAAW, LFAYFYVVLHLLSYSWFDMGF, PFILVGFSAFVLLTPLAATSF, WQLLHKLVYLIAGLGLLHFFW, and VFVYAAIVALLLGWRVWNHWA.

Belongs to the MsrQ family. In terms of assembly, heterodimer of a catalytic subunit (MsrP) and a heme-binding subunit (MsrQ). FMN serves as cofactor. The cofactor is heme b.

It localises to the cell inner membrane. Its function is as follows. Part of the MsrPQ system that repairs oxidized periplasmic proteins containing methionine sulfoxide residues (Met-O), using respiratory chain electrons. Thus protects these proteins from oxidative-stress damage caused by reactive species of oxygen and chlorine generated by the host defense mechanisms. MsrPQ is essential for the maintenance of envelope integrity under bleach stress, rescuing a wide series of structurally unrelated periplasmic proteins from methionine oxidation. MsrQ provides electrons for reduction to the reductase catalytic subunit MsrP, using the quinone pool of the respiratory chain. This chain is Protein-methionine-sulfoxide reductase heme-binding subunit MsrQ, found in Polaromonas naphthalenivorans (strain CJ2).